A 271-amino-acid chain; its full sequence is DNA repair protein RecO (271 aa).

Residues alanine 248–alanine 271 form a disordered region. Residues aspartate 253–threonine 264 are compositionally biased toward basic and acidic residues.

The protein belongs to the RecO family.

Its function is as follows. Involved in DNA repair and RecF pathway recombination. This is DNA repair protein RecO from Rhodococcus opacus (strain B4).